A 151-amino-acid chain; its full sequence is uncharacterized protein (151 aa).

Transmembrane regions (helical) follow at residues 12–32 (LAYF…LFII), 59–79 (LAFL…YGLL), and 114–134 (YFAY…IAFG).

Its subcellular location is the cell membrane. This is an uncharacterized protein from Bacillus subtilis (strain 168).